The chain runs to 229 residues: Ribose-5-phosphate isomerase A (229 aa).

Substrate contacts are provided by residues 28–31 (TGST), 84–87 (DGAD), and 97–100 (KGGG). Glutamate 106 functions as the Proton acceptor in the catalytic mechanism. Substrate is bound at residue lysine 124.

Belongs to the ribose 5-phosphate isomerase family. In terms of assembly, homodimer.

It carries out the reaction aldehydo-D-ribose 5-phosphate = D-ribulose 5-phosphate. It participates in carbohydrate degradation; pentose phosphate pathway; D-ribose 5-phosphate from D-ribulose 5-phosphate (non-oxidative stage): step 1/1. Catalyzes the reversible conversion of ribose-5-phosphate to ribulose 5-phosphate. In Lacticaseibacillus paracasei (strain ATCC 334 / BCRC 17002 / CCUG 31169 / CIP 107868 / KCTC 3260 / NRRL B-441) (Lactobacillus paracasei), this protein is Ribose-5-phosphate isomerase A.